The primary structure comprises 350 residues: Aminomethyltransferase (350 aa).

This sequence belongs to the GcvT family. The glycine cleavage system is composed of four proteins: P, T, L and H.

It catalyses the reaction N(6)-[(R)-S(8)-aminomethyldihydrolipoyl]-L-lysyl-[protein] + (6S)-5,6,7,8-tetrahydrofolate = N(6)-[(R)-dihydrolipoyl]-L-lysyl-[protein] + (6R)-5,10-methylene-5,6,7,8-tetrahydrofolate + NH4(+). In terms of biological role, the glycine cleavage system catalyzes the degradation of glycine. This Aquifex aeolicus (strain VF5) protein is Aminomethyltransferase.